The sequence spans 255 residues: U2 small nuclear ribonucleoprotein A' (255 aa).

LRR repeat units follow at residues 20–41 (RDRELDLRGYKIPVIENLGATL), 43–64 (QFDAIDFSDNEIRKLDGFPLLR), 65–86 (RLKTLLVNNNRICRIGEGLDQA), and 89–110 (CLTELILTNNSLVELGDLDPLA). Positions 123–161 (NPVTNKKHYRLYVIYKVPQVRVLDFQKVKLKERQEAEKM) constitute an LRRCT domain. Lys-172 carries the post-translational modification N6-acetyllysine; alternate. Lys-172 is covalently cross-linked (Glycyl lysine isopeptide (Lys-Gly) (interchain with G-Cter in SUMO2); alternate). Ser-178 and Ser-197 each carry phosphoserine. Positions 179–199 (KTFNPGAGLPTDKKKGGPSAG) are disordered. Lys-221 participates in a covalent cross-link: Glycyl lysine isopeptide (Lys-Gly) (interchain with G-Cter in SUMO2). The disordered stretch occupies residues 222-255 (GLLQSGQIPGRERRSGPSDEGEEEIEDDTVTNGS). A phosphoserine mark is found at Ser-236 and Ser-255. The segment covering 240–255 (DEGEEEIEDDTVTNGS) has biased composition (acidic residues).

It belongs to the U2 small nuclear ribonucleoprotein A family. As to quaternary structure, identified in the spliceosome B complex. Identified in the spliceosome C complex. Found in a pre-mRNA splicing complex with SFRS4, SFRS5, SNRNP70, SNRPA1, SRRM1 and SRRM2. Found in a pre-mRNA exonic splicing enhancer (ESE) complex with SNRNP70, SNRPA1, SRRM1 and TRA2B. Contributes to the binding of stem loop IV of U2 snRNA with SNRPB2.

The protein localises to the nucleus. Functionally, involved in pre-mRNA splicing as component of the spliceosome. Associated with sn-RNP U2, where it contributes to the binding of stem loop IV of U2 snRNA. This Mus musculus (Mouse) protein is U2 small nuclear ribonucleoprotein A' (Snrpa1).